A 143-amino-acid chain; its full sequence is HTH-type transcriptional regulator MntR (143 aa).

One can recognise an HTH dtxR-type domain in the interval 1 to 63; that stretch reads MPTPSMEDYL…YERYRGLVLT (63 aa). Residues Asp-8, Glu-11, His-77, Glu-99, Glu-102, and His-103 each contribute to the Mn(2+) site.

This sequence belongs to the DtxR/MntR family. Homodimer.

Its subcellular location is the cytoplasm. With respect to regulation, DNA binding is strongly activated by Mn(2+). Central regulator of manganese homeostasis. This is HTH-type transcriptional regulator MntR from Shouchella clausii (strain KSM-K16) (Alkalihalobacillus clausii).